The sequence spans 513 residues: Nitrate transporter 2.2 (513 aa).

The next 12 membrane-spanning stretches (helical) occupy residues 38-58 (WICF…APVI), 74-94 (VSAV…VDVV), 98-118 (YGAA…ALVT), 128-148 (FFIG…GTMF), 158-178 (AIAA…MPLI), 196-216 (AFFV…LLGI), 247-265 (LGNY…SFGV), 281-301 (FGLN…MNIF), 323-343 (LWVL…MGKV), 351-371 (IVIM…HFGI), 383-403 (VSGL…AIWF), and 419-439 (FVWM…IWFP).

Belongs to the major facilitator superfamily. Nitrate/nitrite porter (TC 2.A.1.8) family.

The protein localises to the cell membrane. Functionally, involved in nitrate transport, but does not seem to be able to mediate transport by its own. Acts as a dual component transporter with NAR2 (system 2). Involved in a high affinity transport specific for nitrate. This chain is Nitrate transporter 2.2, found in Chlamydomonas reinhardtii (Chlamydomonas smithii).